The primary structure comprises 261 residues: Sepiapterin reductase (261 aa).

Met-1 is modified (N-acetylmethionine). 14–20 (GASRGFG) contacts NADP(+). Phosphoserine is present on Ser-32. Residues 42–43 (RN) and 69–70 (DL) contribute to the NADP(+) site. Position 103 is a phosphoserine (Ser-103). Residues 157–158 (SL) and Tyr-170 each bind substrate. Residue Lys-174 coordinates NADP(+). Gly-199 lines the substrate pocket. NADP(+) is bound at residue 201 to 206 (LDTDMQ). At Ser-213 the chain carries Phosphoserine; by CaMK2; in vitro. Asp-257 is a binding site for substrate.

Belongs to the sepiapterin reductase family. As to quaternary structure, homodimer. Post-translationally, in vitro phosphorylation of Ser-213 by CaMK2 does not change kinetic parameters.

The protein resides in the cytoplasm. The catalysed reaction is L-erythro-7,8-dihydrobiopterin + NADP(+) = L-sepiapterin + NADPH + H(+). The enzyme catalyses (6R)-L-erythro-5,6,7,8-tetrahydrobiopterin + 2 NADP(+) = 6-pyruvoyl-5,6,7,8-tetrahydropterin + 2 NADPH + 2 H(+). In terms of biological role, catalyzes the final one or two reductions in tetra-hydrobiopterin biosynthesis to form 5,6,7,8-tetrahydrobiopterin. The polypeptide is Sepiapterin reductase (SPR) (Homo sapiens (Human)).